The following is a 270-amino-acid chain: Interleukin-1 beta (270 aa).

The propeptide occupies 1 to 118 (MARVPEPTSE…KCDDNAFVHD (118 aa)).

Belongs to the IL-1 family. In terms of assembly, monomer. In its precursor form, weakly interacts with full-length MEFV; the mature cytokine does not interact at all. Interacts with integrins ITGAV:ITGBV and ITGA5:ITGB1; integrin-binding is required for IL1B signaling. Interacts with cargo receptor TMED10; the interaction is direct and is required for the secretion of IL1B mature form. Interacts with HSP90AB1; the interaction facilitates cargo translocation into the ERGIC. Interacts with HSP90B1; the interaction facilitates cargo translocation into the ERGIC.

The protein resides in the cytoplasm. The protein localises to the cytosol. It localises to the secreted. Its subcellular location is the lysosome. It is found in the extracellular exosome. Functionally, potent pro-inflammatory cytokine. Initially discovered as the major endogenous pyrogen, induces prostaglandin synthesis, neutrophil influx and activation, T-cell activation and cytokine production, B-cell activation and antibody production, and fibroblast proliferation and collagen production. Promotes Th17 differentiation of T-cells. Synergizes with IL12/interleukin-12 to induce IFNG synthesis from T-helper 1 (Th1) cells. Plays a role in angiogenesis by inducing VEGF production synergistically with TNF and IL6. Involved in transduction of inflammation downstream of pyroptosis: its mature form is specifically released in the extracellular milieu by passing through the gasdermin-D (GSDMD) pore. The polypeptide is Interleukin-1 beta (IL1B) (Mustela putorius furo (European domestic ferret)).